Here is a 331-residue protein sequence, read N- to C-terminus: Ketol-acid reductoisomerase (NADP(+)) (331 aa).

The 181-residue stretch at alanine 2–threonine 182 folds into the KARI N-terminal Rossmann domain. NADP(+) is bound by residues tyrosine 25–glutamine 28, serine 51, serine 53, and aspartate 83–glutamine 86. Histidine 108 is a catalytic residue. Position 134 (glycine 134) interacts with NADP(+). A KARI C-terminal knotted domain is found at threonine 183–leucine 328. Residues aspartate 191, glutamate 195, glutamate 227, and glutamate 231 each contribute to the Mg(2+) site. A substrate-binding site is contributed by serine 252.

It belongs to the ketol-acid reductoisomerase family. Requires Mg(2+) as cofactor.

The catalysed reaction is (2R)-2,3-dihydroxy-3-methylbutanoate + NADP(+) = (2S)-2-acetolactate + NADPH + H(+). The enzyme catalyses (2R,3R)-2,3-dihydroxy-3-methylpentanoate + NADP(+) = (S)-2-ethyl-2-hydroxy-3-oxobutanoate + NADPH + H(+). It participates in amino-acid biosynthesis; L-isoleucine biosynthesis; L-isoleucine from 2-oxobutanoate: step 2/4. The protein operates within amino-acid biosynthesis; L-valine biosynthesis; L-valine from pyruvate: step 2/4. Involved in the biosynthesis of branched-chain amino acids (BCAA). Catalyzes an alkyl-migration followed by a ketol-acid reduction of (S)-2-acetolactate (S2AL) to yield (R)-2,3-dihydroxy-isovalerate. In the isomerase reaction, S2AL is rearranged via a Mg-dependent methyl migration to produce 3-hydroxy-3-methyl-2-ketobutyrate (HMKB). In the reductase reaction, this 2-ketoacid undergoes a metal-dependent reduction by NADPH to yield (R)-2,3-dihydroxy-isovalerate. The chain is Ketol-acid reductoisomerase (NADP(+)) from Trichormus variabilis (strain ATCC 29413 / PCC 7937) (Anabaena variabilis).